A 188-amino-acid polypeptide reads, in one-letter code: Probable nicotinate-nucleotide adenylyltransferase (188 aa).

It belongs to the NadD family.

The catalysed reaction is nicotinate beta-D-ribonucleotide + ATP + H(+) = deamido-NAD(+) + diphosphate. Its pathway is cofactor biosynthesis; NAD(+) biosynthesis; deamido-NAD(+) from nicotinate D-ribonucleotide: step 1/1. In terms of biological role, catalyzes the reversible adenylation of nicotinate mononucleotide (NaMN) to nicotinic acid adenine dinucleotide (NaAD). The protein is Probable nicotinate-nucleotide adenylyltransferase of Solibacter usitatus (strain Ellin6076).